The primary structure comprises 776 residues: Semaphorin-4F (776 aa).

The first 39 residues, 1-39 (MLARAERPRPGPRPPPVFPFPPPLSLLLLLAILSAPVCG), serve as a signal peptide directing secretion. At 40–665 (RVPRSVPRTS…GPSNRAHTVV (626 aa)) the chain is on the extracellular side. A Sema domain is found at 47-515 (RTSLPISEAD…SHTEVTQVNT (469 aa)). An N-linked (GlcNAc...) asparagine glycan is attached at asparagine 69. A disulfide bridge connects residues cysteine 117 and cysteine 127. Asparagine 138 is a glycosylation site (N-linked (GlcNAc...) asparagine). 3 disulfide bridges follow: cysteine 145-cysteine 154, cysteine 278-cysteine 389, and cysteine 302-cysteine 348. Residue asparagine 514 is glycosylated (N-linked (GlcNAc...) asparagine). The 52-residue stretch at 517-568 (NCGRLQSCSECILAQDPVCAWSFRLDACVAHAGEHRGMVQDIESADVSSLCP) folds into the PSI domain. Cystine bridges form between cysteine 518/cysteine 535, cysteine 527/cysteine 544, and cysteine 592/cysteine 633. The region spanning 585–640 (VGHVVLPCSPSSAWASCVWHQPSGVTALTPRRDGLEVVVTPGAMGAYACECQEGGA) is the Ig-like C2-type domain. Residues 666–686 (GAGLVGFLLGVLAASLTLLLI) traverse the membrane as a helical segment. At 687–776 (GRRQQRRRQR…PLATCDETSI (90 aa)) the chain is on the cytoplasmic side. Residues 702–741 (DKVGLDLGAPPSGTTSYSQDPPSPSPEDERLPLALGKRGS) are disordered. Phosphoserine occurs at positions 724 and 726. The PDZ-binding motif lies at 774–776 (TSI).

It belongs to the semaphorin family. In terms of assembly, interacts (via PDZ-binding motif) with DLG4/SAP90 (via PDZ domain 2); this interaction may promote translocation of DLG4/SAP90 to the membrane. As to expression, expressed at low levels in the developing embryo. Expressed at high levels in the lung and adult central nervous system, including the dorsal root ganglia.

The protein localises to the cell membrane. Its subcellular location is the postsynaptic density. It localises to the perikaryon. It is found in the cell projection. The protein resides in the dendrite. In terms of biological role, probable cell surface receptor that regulates oligodendroglial precursor cell migration. Might also regulate differentiation of oligodendroglial precursor cells. Has growth cone collapse activity against retinal ganglion-cell axons. In Rattus norvegicus (Rat), this protein is Semaphorin-4F (Sema4f).